Here is a 612-residue protein sequence, read N- to C-terminus: RNA polymerase sigma factor RpoD (612 aa).

Acidic residues predominate over residues 191 to 206 (QQNNEEDEENNQEDHE). Residues 191–210 (QQNNEEDEENNQEDHEDDHS) form a disordered region. Residues 378–448 (MVEANLRLVI…TRSIADQART (71 aa)) are sigma-70 factor domain-2. The Interaction with polymerase core subunit RpoC motif lies at 402–405 (DLIQ). The interval 457 to 533 (ETINKLNRIS…DTTLELPLDS (77 aa)) is sigma-70 factor domain-3. A sigma-70 factor domain-4 region spans residues 546–599 (VLSGLTAREAKVLRMRFGIDMNTDHTLEEVGKQFDVTRERIRQIEAKALRKLRH). Residues 572–591 (LEEVGKQFDVTRERIRQIEA) constitute a DNA-binding region (H-T-H motif).

The protein belongs to the sigma-70 factor family. RpoD/SigA subfamily. In terms of assembly, interacts transiently with the RNA polymerase catalytic core.

The protein resides in the cytoplasm. Sigma factors are initiation factors that promote the attachment of RNA polymerase to specific initiation sites and are then released. This sigma factor is the primary sigma factor during exponential growth. The polypeptide is RNA polymerase sigma factor RpoD (Buchnera aphidicola subsp. Acyrthosiphon pisum (strain APS) (Acyrthosiphon pisum symbiotic bacterium)).